Here is a 233-residue protein sequence, read N- to C-terminus: 7-cyano-7-deazaguanine synthase (233 aa).

Position 7 to 17 (7 to 17 (LSGGLDSAVTS)) interacts with ATP. The Zn(2+) site is built by cysteine 195, cysteine 206, cysteine 209, and cysteine 212.

Belongs to the QueC family. It depends on Zn(2+) as a cofactor.

The enzyme catalyses 7-carboxy-7-deazaguanine + NH4(+) + ATP = 7-cyano-7-deazaguanine + ADP + phosphate + H2O + H(+). It participates in purine metabolism; 7-cyano-7-deazaguanine biosynthesis. Catalyzes the ATP-dependent conversion of 7-carboxy-7-deazaguanine (CDG) to 7-cyano-7-deazaguanine (preQ(0)). The polypeptide is 7-cyano-7-deazaguanine synthase (Methanococcus maripaludis (strain C6 / ATCC BAA-1332)).